Reading from the N-terminus, the 781-residue chain is Sialidase (781 aa).

The first 24 residues, 1–24 (MRFKNVKKTALMLAMFGMATSSNA), serve as a signal peptide directing secretion. Arg-224 lines the substrate pocket. Asp-250 acts as the Proton acceptor in catalysis. BNR repeat units follow at residues 263–274 (RTSRDGGITWDT) and 585–596 (IYSDDGGSNWQT). The active site involves Glu-619. Arg-635 contacts substrate. A BNR 3 repeat occupies 653–664 (FLSKDGGITWSL). Arg-712 is a substrate binding site. The BNR 4 repeat unit spans residues 718-729 (WFSFDEGVTWKG). Catalysis depends on Tyr-740, which acts as the Nucleophile.

Belongs to the glycosyl hydrolase 33 family. In terms of assembly, monomer. The cofactor is Ca(2+).

The protein resides in the secreted. The catalysed reaction is Hydrolysis of alpha-(2-&gt;3)-, alpha-(2-&gt;6)-, alpha-(2-&gt;8)- glycosidic linkages of terminal sialic acid residues in oligosaccharides, glycoproteins, glycolipids, colominic acid and synthetic substrates.. In terms of biological role, cleaves the terminal sialic acid (N-acetyl neuraminic acid) from carbohydrate chains in glycoproteins providing free sialic acid which can be used as carbon and energy sources. Sialidases have been suggested to be pathogenic factors in microbial infections. Facilitates cholera toxin binding to host intestinal epithelial cells by converting cell surface polysialogangliosides to GM1 monogangliosides. In Vibrio cholerae serotype O1 (strain ATCC 39541 / Classical Ogawa 395 / O395), this protein is Sialidase (nanH).